The sequence spans 219 residues: Thiamine-phosphate synthase (219 aa).

4-amino-2-methyl-5-(diphosphooxymethyl)pyrimidine-binding positions include 44 to 48 (QLREK) and Asn-79. Residues Asp-80 and Asp-99 each coordinate Mg(2+). Ser-117 contacts 4-amino-2-methyl-5-(diphosphooxymethyl)pyrimidine. 143–145 (TST) lines the 2-[(2R,5Z)-2-carboxy-4-methylthiazol-5(2H)-ylidene]ethyl phosphate pocket. Lys-146 is a 4-amino-2-methyl-5-(diphosphooxymethyl)pyrimidine binding site. 2-[(2R,5Z)-2-carboxy-4-methylthiazol-5(2H)-ylidene]ethyl phosphate is bound by residues Gly-175 and 195–196 (IS).

This sequence belongs to the thiamine-phosphate synthase family. Requires Mg(2+) as cofactor.

It carries out the reaction 2-[(2R,5Z)-2-carboxy-4-methylthiazol-5(2H)-ylidene]ethyl phosphate + 4-amino-2-methyl-5-(diphosphooxymethyl)pyrimidine + 2 H(+) = thiamine phosphate + CO2 + diphosphate. It catalyses the reaction 2-(2-carboxy-4-methylthiazol-5-yl)ethyl phosphate + 4-amino-2-methyl-5-(diphosphooxymethyl)pyrimidine + 2 H(+) = thiamine phosphate + CO2 + diphosphate. The enzyme catalyses 4-methyl-5-(2-phosphooxyethyl)-thiazole + 4-amino-2-methyl-5-(diphosphooxymethyl)pyrimidine + H(+) = thiamine phosphate + diphosphate. It functions in the pathway cofactor biosynthesis; thiamine diphosphate biosynthesis; thiamine phosphate from 4-amino-2-methyl-5-diphosphomethylpyrimidine and 4-methyl-5-(2-phosphoethyl)-thiazole: step 1/1. Condenses 4-methyl-5-(beta-hydroxyethyl)thiazole monophosphate (THZ-P) and 2-methyl-4-amino-5-hydroxymethyl pyrimidine pyrophosphate (HMP-PP) to form thiamine monophosphate (TMP). This chain is Thiamine-phosphate synthase, found in Bacillus mycoides (strain KBAB4) (Bacillus weihenstephanensis).